The primary structure comprises 477 residues: Minor capsid protein (477 aa).

The protein belongs to the closteroviridae minor capsid protein family.

The protein resides in the virion. Functionally, minor capsid protein that encapsidates the 5'-terminal portion of the viral genome. This chain is Minor capsid protein, found in Vitis vinifera (Grape).